The chain runs to 372 residues: D-alanine--D-alanine ligase (372 aa).

The region spanning 145-349 is the ATP-grasp domain; that stretch reads KTVLRAGGIP…CPNLLDQLIE (205 aa). 176–231 contributes to the ATP binding site; the sequence is DRWGTSELFVKAVSLGSSVATLPVKTETEFTKAVKEVFRYDDRLMVEPRIRGREIE. Mg(2+)-binding residues include Asp-303, Glu-316, and Asn-318.

This sequence belongs to the D-alanine--D-alanine ligase family. Requires Mg(2+) as cofactor. It depends on Mn(2+) as a cofactor.

The protein resides in the cytoplasm. The enzyme catalyses 2 D-alanine + ATP = D-alanyl-D-alanine + ADP + phosphate + H(+). It functions in the pathway cell wall biogenesis; peptidoglycan biosynthesis. Cell wall formation. The polypeptide is D-alanine--D-alanine ligase (Coxiella burnetii (strain RSA 331 / Henzerling II)).